Reading from the N-terminus, the 175-residue chain is Bifunctional protein PyrR (175 aa).

The PRPP-binding signature appears at 98–110; that stretch reads VIIIDDVLYTGRT.

This sequence belongs to the purine/pyrimidine phosphoribosyltransferase family. PyrR subfamily. As to quaternary structure, homodimer and homohexamer; in equilibrium.

It catalyses the reaction UMP + diphosphate = 5-phospho-alpha-D-ribose 1-diphosphate + uracil. Its function is as follows. Regulates transcriptional attenuation of the pyrimidine nucleotide (pyr) operon by binding in a uridine-dependent manner to specific sites on pyr mRNA. This disrupts an antiterminator hairpin in the RNA and favors formation of a downstream transcription terminator, leading to a reduced expression of downstream genes. In terms of biological role, also displays a weak uracil phosphoribosyltransferase activity which is not physiologically significant. This Staphylococcus carnosus (strain TM300) protein is Bifunctional protein PyrR.